We begin with the raw amino-acid sequence, 379 residues long: Citrate synthase (379 aa).

Active-site residues include histidine 225, histidine 265, and aspartate 316.

This sequence belongs to the citrate synthase family. Homodimer.

The catalysed reaction is oxaloacetate + acetyl-CoA + H2O = citrate + CoA + H(+). It functions in the pathway carbohydrate metabolism; tricarboxylic acid cycle; isocitrate from oxaloacetate: step 1/2. Might regulate the synthesis and function of enzymes involved in later enzymatic steps of Krebs cycle. The polypeptide is Citrate synthase (citZ) (Haloferax volcanii (strain ATCC 29605 / DSM 3757 / JCM 8879 / NBRC 14742 / NCIMB 2012 / VKM B-1768 / DS2) (Halobacterium volcanii)).